An 89-amino-acid polypeptide reads, in one-letter code: Protein RALF-like 5 (89 aa).

The first 25 residues, methionine 1–alanine 25, serve as a signal peptide directing secretion. 2 disulfide bridges follow: cysteine 39/cysteine 48 and cysteine 61/cysteine 67.

The protein belongs to the plant rapid alkalinization factor (RALF) family.

The protein resides in the secreted. Its function is as follows. Cell signaling peptide that may regulate plant stress, growth, and development. Mediates a rapid alkalinization of extracellular space by mediating a transient increase in the cytoplasmic Ca(2+) concentration leading to a calcium-dependent signaling events through a cell surface receptor and a concomitant activation of some intracellular mitogen-activated protein kinases. The protein is Protein RALF-like 5 (RALFL5) of Arabidopsis thaliana (Mouse-ear cress).